The primary structure comprises 244 residues: 27 kDa core protein (244 aa).

The protein belongs to the chordopoxvirinae D3 family.

It is found in the virion. Its function is as follows. Late protein which is part of a large complex required for early virion morphogenesis. This complex participates in the formation of virosomes and the incorporation of virosomal contents into nascent immature virions. This chain is 27 kDa core protein, found in Swinepox virus (strain Swine/Nebraska/17077-99/1999) (SWPV).